The primary structure comprises 370 residues: Chorismate synthase (370 aa).

Arginine 48 is a binding site for NADP(+). FMN-binding positions include 125 to 127, 241 to 242, glycine 285, 300 to 304, and arginine 326; these read RSS, NA, and KPTSS.

This sequence belongs to the chorismate synthase family. Homotetramer. It depends on FMNH2 as a cofactor.

It carries out the reaction 5-O-(1-carboxyvinyl)-3-phosphoshikimate = chorismate + phosphate. The protein operates within metabolic intermediate biosynthesis; chorismate biosynthesis; chorismate from D-erythrose 4-phosphate and phosphoenolpyruvate: step 7/7. Catalyzes the anti-1,4-elimination of the C-3 phosphate and the C-6 proR hydrogen from 5-enolpyruvylshikimate-3-phosphate (EPSP) to yield chorismate, which is the branch point compound that serves as the starting substrate for the three terminal pathways of aromatic amino acid biosynthesis. This reaction introduces a second double bond into the aromatic ring system. In Jannaschia sp. (strain CCS1), this protein is Chorismate synthase.